A 264-amino-acid chain; its full sequence is MMSDQENENEHAKAFLGLAKCEEEVDAIEREVELYRLNKMKPVYEKRDAYIDEIAEFWKIVLSQHVSFANYIRASDFKYIDTIDKIKVEWLALESEMYDTRDFSITFHFHGIEGDFKEQQVTKVFQIKKGKDDQEDGILTSEPVPIEWPQSYDSINPDLIKDKRSPEGKKKYRQGMKTIFGWFRWTGLKPGKEFPHGDSLASLFSEEIYPFCVKYYAEAQRDLEDEEGESGLSADGDSEDDDGSLGEVDLPLSDEEPSSKKRKV.

Serine 3 is modified (phosphoserine). A disordered region spans residues 223–264 (LEDEEGESGLSADGDSEDDDGSLGEVDLPLSDEEPSSKKRKV).

Belongs to the nucleosome assembly protein (NAP) family. In terms of assembly, homodimer. Homotetramer. Forms a complex with RTT109; consisting of a VPS75 dimer contacted by two RTT109 subunits. Interacts with RTT109; the interaction is direct. Interacts with ASF1. Interacts with histone H3/H4 heterodimers and heterotetramers via histone H3.

It is found in the nucleus. In terms of biological role, histone chaperone which acts as a cofactor stimulating histone H3 acetylation by RTT109. Preferentially stimulates histone H3 'Lys-9' acetylation by RTT109. May also stimulate histone H3 'Lys-56' acetylation by RTT109. Assembles nucleosomes (in vitro). The sequence is that of Vacuolar protein sorting-associated protein 75 (VPS75) from Saccharomyces cerevisiae (strain ATCC 204508 / S288c) (Baker's yeast).